The chain runs to 360 residues: Aurora kinase B (360 aa).

One can recognise a Protein kinase domain in the interval 93-343 (FDIGRPLGKG…LKGVMEHPWV (251 aa)). ATP contacts are provided by residues 99–107 (LGKGKFGNV) and K122. D216 acts as the Proton acceptor in catalysis.

It belongs to the protein kinase superfamily. Ser/Thr protein kinase family. Aurora subfamily. In terms of assembly, component of the chromosomal passenger complex (CPC).

The protein localises to the nucleus. The protein resides in the chromosome. Its subcellular location is the centromere. It is found in the cytoplasm. It localises to the cytoskeleton. The protein localises to the spindle. The protein resides in the midbody. The catalysed reaction is L-seryl-[protein] + ATP = O-phospho-L-seryl-[protein] + ADP + H(+). It catalyses the reaction L-threonyl-[protein] + ATP = O-phospho-L-threonyl-[protein] + ADP + H(+). With respect to regulation, kinase activity is stimulated by cell-cycle specific phosphorylation. Its function is as follows. Serine/threonine-protein kinase component of the chromosomal passenger complex (CPC), a complex that acts as a key regulator of mitosis. The CPC complex has essential functions at the centromere in ensuring correct chromosome alignment and segregation and is required for chromatin-induced microtubule stabilization and spindle assembly. Involved in the bipolar attachment of spindle microtubules to kinetochores and is a key regulator for the onset of cytokinesis during mitosis. Required for central/midzone spindle assembly and cleavage furrow formation. Key component of the cytokinesis checkpoint, a process required to delay abscission to prevent both premature resolution of intercellular chromosome bridges and accumulation of DNA damage. Phosphorylates 'Ser-10' of histone H3 during mitosis. The protein is Aurora kinase B of Xenopus tropicalis (Western clawed frog).